The sequence spans 563 residues: Methylcrotonoyl-CoA carboxylase beta chain, mitochondrial (563 aa).

The transit peptide at 1 to 22 (MWGALRSALRPCCRAAVPPQRA) directs the protein to the mitochondrion. Residues 49–306 (MKALVSQLHE…QKKMDVTIEP (258 aa)) enclose the CoA carboxyltransferase N-terminal domain. The carboxyltransferase stretch occupies residues 49 to 555 (MKALVSQLHE…SAALNAPIQR (507 aa)). Lys-70 bears the N6-acetyllysine; alternate mark. Position 70 is an N6-succinyllysine; alternate (Lys-70). Lys-141 carries the N6-succinyllysine modification. Positions 309 to 555 (EPLFPADELY…SAALNAPIQR (247 aa)) constitute a CoA carboxyltransferase C-terminal domain. An acyl-CoA binding region spans residues 343 to 372 (RFNEFKALYGDTLVTGFARIFGYPVGIIGN). Lys-433 is modified (N6-succinyllysine). Lys-495 carries the post-translational modification N6-acetyllysine; alternate. The residue at position 495 (Lys-495) is an N6-succinyllysine; alternate. Position 511 is an N6-acetyllysine (Lys-511).

This sequence belongs to the AccD/PCCB family. In terms of assembly, probably a dodecamer composed of six biotin-containing alpha subunits (MCCC1) and six beta (MCCC2) subunits.

Its subcellular location is the mitochondrion matrix. The enzyme catalyses 3-methylbut-2-enoyl-CoA + hydrogencarbonate + ATP = 3-methyl-(2E)-glutaconyl-CoA + ADP + phosphate + H(+). It participates in amino-acid degradation; L-leucine degradation; (S)-3-hydroxy-3-methylglutaryl-CoA from 3-isovaleryl-CoA: step 2/3. In terms of biological role, carboxyltransferase subunit of the 3-methylcrotonyl-CoA carboxylase, an enzyme that catalyzes the conversion of 3-methylcrotonyl-CoA to 3-methylglutaconyl-CoA, a critical step for leucine and isovaleric acid catabolism. This Mus musculus (Mouse) protein is Methylcrotonoyl-CoA carboxylase beta chain, mitochondrial (Mccc2).